Consider the following 333-residue polypeptide: Na(+)/H(+) exchange regulatory cofactor NHE-RF1 (333 aa).

A PDZ 1 domain is found at 13-93 (LCCMEKGPDG…AVRLLVVQPQ (81 aa)). 2 disordered regions span residues 90–164 (VQPQ…RAVD) and 232–333 (LAGP…FSNL). The span at 97 to 111 (QPPKTHSDPDGEAQR) shows a compositional bias: basic and acidic residues. The span at 112-122 (EPPAAETPAAE) shows a compositional bias: low complexity. Residues 124–133 (SGPEERELRP) show a composition bias toward basic and acidic residues. Residues 135-215 (LCRIKKGPNG…ETKLLVVGVL (81 aa)) enclose the PDZ 2 domain. 2 stretches are compositionally biased toward basic and acidic residues: residues 274 to 289 (SETH…DKRS) and 323 to 333 (WSKKNELFSNL).

The protein localises to the endomembrane system. Its subcellular location is the cell projection. It is found in the filopodium. It localises to the ruffle. The protein resides in the microvillus. Its function is as follows. Scaffold protein that connects plasma membrane proteins with members of the ezrin/moesin/radixin family and thereby helps to link them to the actin cytoskeleton and to regulate their surface expression. Was first known to play a role in the regulation of the activity and subcellular location of SLC9A3. May enhance Wnt signaling. The sequence is that of Na(+)/H(+) exchange regulatory cofactor NHE-RF1 (NHERF1) from Gallus gallus (Chicken).